The following is a 526-amino-acid chain: MFDSNHEQELSKRRTFAIISHPDAGKTTITEKMLFFGKVIRVPGTIKGRGSGKYAKSDWMNIEKERGISITTSVMQFTYKNILMNLLDTPGHQDFSEDTYRILTAVDCCLVVIDAAKGIEERTRKLMDVARIHNTPIITFINKLDRDSRDPIEILDEIEKELKLHCIPISWPISCGKNFRGVYHIHDKIIHLYKSKFRKNFLTLDSFLDGSLNEYLGADLSIYIRQELELIMNVYSKFNKEKFLKGITTPIFFGSALGNFGIDHLLDSLIKWAPSPLYRQSNKRIIKPQERNFTGFIFKIQANMDLKHRDRIAFMRIVSGQYTKGMKLTHVRIKKNIIISDAFSFLAGERISINKAYPGDVIGLHNHGTIKIGDTFTQGEEIKFIGIPSFAPEIFRLIYLKNPLKQKQLKKGLVQLSEEGTVQVFRPILNNDLILGAIGILQFDVVIERLRIEYNIDAVYKKVNIVLARWINCGNHHSLYNLKKSYSSYLAYDISNSLIYLAPSSANLNIVMSQNSDISFNATREQ.

The 267-residue stretch at 11-277 folds into the tr-type G domain; sequence SKRRTFAIIS…SLIKWAPSPL (267 aa). Residues 20 to 27, 88 to 92, and 142 to 145 each bind GTP; these read SHPDAGKT, DTPGH, and NKLD.

Belongs to the TRAFAC class translation factor GTPase superfamily. Classic translation factor GTPase family. PrfC subfamily.

It localises to the cytoplasm. Increases the formation of ribosomal termination complexes and stimulates activities of RF-1 and RF-2. It binds guanine nucleotides and has strong preference for UGA stop codons. It may interact directly with the ribosome. The stimulation of RF-1 and RF-2 is significantly reduced by GTP and GDP, but not by GMP. This Buchnera aphidicola subsp. Acyrthosiphon pisum (strain Tuc7) protein is Peptide chain release factor 3.